The following is a 238-amino-acid chain: Ribitol-5-phosphate cytidylyltransferase (238 aa).

CTP is bound by residues 7-10 (LAGG) and 81-87 (GDDRNHS).

Belongs to the IspD/TarI cytidylyltransferase family. TarI subfamily.

It catalyses the reaction D-ribitol 5-phosphate + CTP + H(+) = CDP-L-ribitol + diphosphate. It functions in the pathway cell wall biogenesis; poly(ribitol phosphate) teichoic acid biosynthesis. In terms of biological role, catalyzes the transfer of the cytidylyl group of CTP to D-ribitol 5-phosphate. The chain is Ribitol-5-phosphate cytidylyltransferase from Staphylococcus epidermidis (strain ATCC 12228 / FDA PCI 1200).